A 237-amino-acid polypeptide reads, in one-letter code: Ribonuclease PH (237 aa).

Residues Arg-86 and 124 to 126 each bind phosphate; that span reads GTR.

This sequence belongs to the RNase PH family. In terms of assembly, homohexameric ring arranged as a trimer of dimers.

The enzyme catalyses tRNA(n+1) + phosphate = tRNA(n) + a ribonucleoside 5'-diphosphate. In terms of biological role, phosphorolytic 3'-5' exoribonuclease that plays an important role in tRNA 3'-end maturation. Removes nucleotide residues following the 3'-CCA terminus of tRNAs; can also add nucleotides to the ends of RNA molecules by using nucleoside diphosphates as substrates, but this may not be physiologically important. Probably plays a role in initiation of 16S rRNA degradation (leading to ribosome degradation) during starvation. This chain is Ribonuclease PH, found in Rhodopseudomonas palustris (strain ATCC BAA-98 / CGA009).